Consider the following 202-residue polypeptide: Peptidyl-tRNA hydrolase (202 aa).

Position 14 (Tyr14) interacts with tRNA. His19 functions as the Proton acceptor in the catalytic mechanism. TRNA contacts are provided by Tyr64, Asn66, and Asn112.

The protein belongs to the PTH family. Monomer.

It is found in the cytoplasm. It catalyses the reaction an N-acyl-L-alpha-aminoacyl-tRNA + H2O = an N-acyl-L-amino acid + a tRNA + H(+). Its function is as follows. Hydrolyzes ribosome-free peptidyl-tRNAs (with 1 or more amino acids incorporated), which drop off the ribosome during protein synthesis, or as a result of ribosome stalling. Catalyzes the release of premature peptidyl moieties from peptidyl-tRNA molecules trapped in stalled 50S ribosomal subunits, and thus maintains levels of free tRNAs and 50S ribosomes. This is Peptidyl-tRNA hydrolase from Xanthobacter autotrophicus (strain ATCC BAA-1158 / Py2).